Here is a 340-residue protein sequence, read N- to C-terminus: GTP 3',8-cyclase (340 aa).

Positions 8-227 (KLGRPIRDLR…DMIESHFDIE (220 aa)) constitute a Radical SAM core domain. Residue R17 coordinates GTP. 2 residues coordinate [4Fe-4S] cluster: C24 and C28. Residue Y30 coordinates S-adenosyl-L-methionine. C31 contributes to the [4Fe-4S] cluster binding site. R71 is a binding site for GTP. G75 contacts S-adenosyl-L-methionine. T102 contributes to the GTP binding site. S-adenosyl-L-methionine is bound at residue S126. K163 contacts GTP. M197 lines the S-adenosyl-L-methionine pocket. [4Fe-4S] cluster is bound by residues C261 and C264. 266 to 268 (RAR) serves as a coordination point for GTP. C278 contributes to the [4Fe-4S] cluster binding site.

The protein belongs to the radical SAM superfamily. MoaA family. In terms of assembly, monomer and homodimer. [4Fe-4S] cluster serves as cofactor.

The enzyme catalyses GTP + AH2 + S-adenosyl-L-methionine = (8S)-3',8-cyclo-7,8-dihydroguanosine 5'-triphosphate + 5'-deoxyadenosine + L-methionine + A + H(+). Its pathway is cofactor biosynthesis; molybdopterin biosynthesis. Catalyzes the cyclization of GTP to (8S)-3',8-cyclo-7,8-dihydroguanosine 5'-triphosphate. This Staphylococcus haemolyticus (strain JCSC1435) protein is GTP 3',8-cyclase.